The following is a 955-amino-acid chain: 4-alpha-glucanotransferase DPE2 (955 aa).

M1 is subject to N-acetylmethionine. CBM20 domains are found at residues 13–122 (KSSK…LWQS) and 157–270 (SDQD…PWRG). The interval 925–955 (SGRSVPANVSGEDINKSRGEVIANGSTKPNP) is disordered.

It belongs to the disproportionating enzyme family.

The protein localises to the cytoplasm. Its subcellular location is the cytosol. The enzyme catalyses Transfers a segment of a (1-&gt;4)-alpha-D-glucan to a new position in an acceptor, which may be glucose or a (1-&gt;4)-alpha-D-glucan.. With respect to regulation, inactivated in response to cold stress. Its function is as follows. Cytosolic alpha-glucanotransferase essential for the cytosolic metabolism of maltose, an intermediate on the pathway by which starch is converted to sucrose in leaves at night. Metabolizes maltose exported from the chloroplast and is specific for beta-maltose. May play a role in freezing tolerance. Temperature drop induces inactivation of DPE2 that leads to rapid accumulation of maltose, a solute that protects cells from freezing damage. This chain is 4-alpha-glucanotransferase DPE2 (DPE2), found in Arabidopsis thaliana (Mouse-ear cress).